Reading from the N-terminus, the 170-residue chain is CASP-like protein 1F1 (170 aa).

Residues 1–16 lie on the Cytoplasmic side of the membrane; it reads MMGDNEGRRTPLLNLG. A helical transmembrane segment spans residues 17 to 37; sequence VQVSMRVLTIGAAMASMWVMI. The Extracellular portion of the chain corresponds to 38–62; it reads TNREVASVYGIAFEAKYSYSSAFRY. The helical transmembrane segment at 63–83 threads the bilayer; the sequence is LVYAQIAVCAATLFTLVWACL. Over 84–88 the chain is Cytoplasmic; it reads AVRRR. The helical transmembrane segment at 89 to 109 threads the bilayer; the sequence is GLVFALFFFDLLTTLTAISAF. Residues 110 to 141 are Extracellular-facing; it reads SAAFAEGYVGKYGNKQAGWLPICGYVHGYCSR. The helical transmembrane segment at 142–162 threads the bilayer; sequence VTISLAMSFASFILLFILTVL. Residues 163–170 lie on the Cytoplasmic side of the membrane; sequence TASAARHY.

The protein belongs to the Casparian strip membrane proteins (CASP) family. Homodimer and heterodimers. In terms of tissue distribution, in flowers, expressed in the anther wall.

It localises to the cell membrane. The protein is CASP-like protein 1F1 of Arabidopsis thaliana (Mouse-ear cress).